The primary structure comprises 875 residues: Translation initiation factor IF-2 (875 aa).

3 disordered regions span residues 1–20 (MSDSDKKPTLGRRPLGLKTA), 47–102 (LMGR…LREA), and 126–246 (EEER…DRRG). Residues 54–66 (AAPTAAPAAAATP) show a composition bias toward low complexity. A compositionally biased stretch (pro residues) spans 67–85 (APTPVAPPPPPPPPPPPPS). Basic and acidic residues-rich tracts occupy residues 88 to 102 (RETRQEMQVRLLREA) and 126 to 140 (EEERRRAEEKARAEA). 2 stretches are compositionally biased toward low complexity: residues 141–195 (EAAA…PAAP) and 202–221 (PAAPAVPAPRRFTPVAPAAP). Positions 223–246 (KRPELAAKKPAHPQRDRKTEDRRG) are enriched in basic and acidic residues. In terms of domain architecture, tr-type G spans 374–544 (ARPPVVTIMG…LLQAELLELK (171 aa)). The tract at residues 383 to 390 (GHVDHGKT) is G1. Residue 383 to 390 (GHVDHGKT) participates in GTP binding. The tract at residues 408–412 (GITQH) is G2. A G3 region spans residues 430–433 (DTPG). GTP-binding positions include 430 to 434 (DTPGH) and 484 to 487 (TKAD). The interval 484–487 (TKAD) is G4. The G5 stretch occupies residues 520–522 (SAK).

It belongs to the TRAFAC class translation factor GTPase superfamily. Classic translation factor GTPase family. IF-2 subfamily.

It localises to the cytoplasm. In terms of biological role, one of the essential components for the initiation of protein synthesis. Protects formylmethionyl-tRNA from spontaneous hydrolysis and promotes its binding to the 30S ribosomal subunits. Also involved in the hydrolysis of GTP during the formation of the 70S ribosomal complex. This Novosphingobium aromaticivorans (strain ATCC 700278 / DSM 12444 / CCUG 56034 / CIP 105152 / NBRC 16084 / F199) protein is Translation initiation factor IF-2.